Consider the following 156-residue polypeptide: Cytochrome c-type biogenesis protein CcmE (156 aa).

Over 1–7 (MTRRQRR) the chain is Cytoplasmic. Residues 8-28 (LGILLAALVCAGAATALTLNA) form a helical; Signal-anchor for type II membrane protein membrane-spanning segment. The Periplasmic portion of the chain corresponds to 29-156 (FRSNLVFFFS…AKESARSASR (128 aa)). Heme is bound by residues His-123 and Tyr-127.

It belongs to the CcmE/CycJ family.

Its subcellular location is the cell inner membrane. Functionally, heme chaperone required for the biogenesis of c-type cytochromes. Transiently binds heme delivered by CcmC and transfers the heme to apo-cytochromes in a process facilitated by CcmF and CcmH. The polypeptide is Cytochrome c-type biogenesis protein CcmE (Ralstonia pickettii (strain 12J)).